The following is a 278-amino-acid chain: Cytoplasmic envelopment protein 1 (278 aa).

This sequence belongs to the herpesviridae cytoplasmic envelopment protein 1 family. In terms of assembly, interacts with BSRF1 tegument protein; the BBRF2-BSRF1 complexes oligomerize and might play a role in tethering the viral nucleocapsids to the host Golgi membrane during secondary envelopment.

It localises to the virion. The protein resides in the virion tegument. The protein localises to the host cytoplasm. It is found in the host Golgi apparatus. In terms of biological role, plays a critical role in cytoplasmic virus egress. Participates in the final step of tegumentation and envelope acquisition within the host cytoplasm. The protein is Cytoplasmic envelopment protein 1 of Homo sapiens (Human).